The chain runs to 273 residues: 4-hydroxy-tetrahydrodipicolinate reductase (273 aa).

NAD(+) is bound by residues 12-17 (GAGGRM) and Glu-38. An NADP(+)-binding site is contributed by Arg-39. NAD(+) contacts are provided by residues 102–104 (GTT) and 126–129 (AANF). The active-site Proton donor/acceptor is His-159. Residue His-160 coordinates (S)-2,3,4,5-tetrahydrodipicolinate. Lys-163 serves as the catalytic Proton donor. 169–170 (GT) provides a ligand contact to (S)-2,3,4,5-tetrahydrodipicolinate.

Belongs to the DapB family. Homotetramer.

Its subcellular location is the cytoplasm. It catalyses the reaction (S)-2,3,4,5-tetrahydrodipicolinate + NAD(+) + H2O = (2S,4S)-4-hydroxy-2,3,4,5-tetrahydrodipicolinate + NADH + H(+). The catalysed reaction is (S)-2,3,4,5-tetrahydrodipicolinate + NADP(+) + H2O = (2S,4S)-4-hydroxy-2,3,4,5-tetrahydrodipicolinate + NADPH + H(+). It participates in amino-acid biosynthesis; L-lysine biosynthesis via DAP pathway; (S)-tetrahydrodipicolinate from L-aspartate: step 4/4. In terms of biological role, catalyzes the conversion of 4-hydroxy-tetrahydrodipicolinate (HTPA) to tetrahydrodipicolinate. The polypeptide is 4-hydroxy-tetrahydrodipicolinate reductase (Escherichia coli O139:H28 (strain E24377A / ETEC)).